We begin with the raw amino-acid sequence, 127 residues long: Protein ApaG (127 aa).

Residues 3-127 form the ApaG domain; the sequence is KDKRYAFSVK…FQLNMPRVLH (125 aa).

In Methylobacillus flagellatus (strain ATCC 51484 / DSM 6875 / VKM B-1610 / KT), this protein is Protein ApaG.